Reading from the N-terminus, the 99-residue chain is MAFGVKREELNRWKQAVKRGEIAFLTHYWLDDRFPEAKTVTKAGCADIDKLVQWGAAYGLKKEWIHKKSEFPHFDLLGETQKYILEQENLTDHLIRFHL.

This is an uncharacterized protein from Bacillus subtilis (strain 168).